We begin with the raw amino-acid sequence, 503 residues long: Maturase K (503 aa).

It belongs to the intron maturase 2 family. MatK subfamily.

The protein resides in the plastid. The protein localises to the chloroplast. Functionally, usually encoded in the trnK tRNA gene intron. Probably assists in splicing its own and other chloroplast group II introns. This is Maturase K from Vicia sativa (Spring vetch).